Consider the following 267-residue polypeptide: Soluble interferon gamma receptor OPG193 (267 aa).

The signal sequence occupies residues 1 to 17 (MRYIIILAVLFINSIHA). N-linked (GlcNAc...) asparagine; by host glycans are attached at residues Asn-42 and Asn-150.

Belongs to the type II cytokine receptor family. As to quaternary structure, homodimer. Interacts with host IFNG.

Its subcellular location is the secreted. Functionally, counteracts the antiviral effects of host IFN-gamma. Acts as a soluble IFN-gamma receptor and thus inhibits the interaction between host IFN-gamma and its receptor. The protein is Soluble interferon gamma receptor OPG193 (OPG193) of Cynomys gunnisoni (Gunnison's prairie dog).